Reading from the N-terminus, the 427-residue chain is Trigger factor (427 aa).

Residues 163–248 (GDTVVIDFVG…IHEVKAKEVP (86 aa)) enclose the PPIase FKBP-type domain.

The protein belongs to the FKBP-type PPIase family. Tig subfamily.

The protein resides in the cytoplasm. It catalyses the reaction [protein]-peptidylproline (omega=180) = [protein]-peptidylproline (omega=0). Its function is as follows. Involved in protein export. Acts as a chaperone by maintaining the newly synthesized protein in an open conformation. Functions as a peptidyl-prolyl cis-trans isomerase. In Streptococcus pneumoniae serotype 4 (strain ATCC BAA-334 / TIGR4), this protein is Trigger factor.